The following is a 156-amino-acid chain: Endoribonuclease YbeY (156 aa).

Zn(2+) contacts are provided by His-122, His-126, and His-132.

This sequence belongs to the endoribonuclease YbeY family. Requires Zn(2+) as cofactor.

The protein localises to the cytoplasm. Single strand-specific metallo-endoribonuclease involved in late-stage 70S ribosome quality control and in maturation of the 3' terminus of the 16S rRNA. This Moorella thermoacetica (strain ATCC 39073 / JCM 9320) protein is Endoribonuclease YbeY.